A 136-amino-acid chain; its full sequence is ATP synthase epsilon chain (136 aa).

The protein belongs to the ATPase epsilon chain family. As to quaternary structure, F-type ATPases have 2 components, CF(1) - the catalytic core - and CF(0) - the membrane proton channel. CF(1) has five subunits: alpha(3), beta(3), gamma(1), delta(1), epsilon(1). CF(0) has three main subunits: a, b and c.

Its subcellular location is the cellular thylakoid membrane. In terms of biological role, produces ATP from ADP in the presence of a proton gradient across the membrane. The polypeptide is ATP synthase epsilon chain (atpC) (Prochloron didemni).